The following is a 467-amino-acid chain: Uronate isomerase (467 aa).

It belongs to the metallo-dependent hydrolases superfamily. Uronate isomerase family.

The enzyme catalyses D-glucuronate = D-fructuronate. It carries out the reaction aldehydo-D-galacturonate = keto-D-tagaturonate. It participates in carbohydrate metabolism; pentose and glucuronate interconversion. The polypeptide is Uronate isomerase (Mannheimia succiniciproducens (strain KCTC 0769BP / MBEL55E)).